The primary structure comprises 37 residues: Large ribosomal subunit protein bL36 (37 aa).

Belongs to the bacterial ribosomal protein bL36 family.

This is Large ribosomal subunit protein bL36 from Thermobifida fusca (strain YX).